We begin with the raw amino-acid sequence, 950 residues long: MDMAQYQPGQRWISDSEAELGLGTILAQDGRLLTVLYPATGDTRQYALRNAPLTRVRFAPGDEVTHFEGWKMTVREVEESEGLLVYHGLTAQNEQCTLPETQLSNFIQFRLASDRLFAGQIDPLPWFSLRYHTLERRSQLLQSSLWGLGGARAQPIAHQLHIAREVADRMAPRVLLADEVGLGKTIEAGLIIHRQLLSGRAGRVLILVPENLQHQWLVEMRRRFNLQVALFDKERFAESDASNPFEDTQLALVALEWLKEDERAQDALFAAGWDLLVVDEAHHLVWHQDQVSAEYALVEQLAEIIPGVLLLTATPEQLGQDSHFARLRLLDPNRFHDLEAFRRESEQYRPVAEAVQELLDHGSLSAGARKAIHGFLGSEGDELLASVEGGDEEARSRLVRELLDRHGTGRVLFRNTRAAVQGFPQRELHAYPLPMPSQYEELPAGEHPDLYPEVNFQQQWEDGDDNNRWWRFDPRVEWLIDTLKMLKQFKVLVICAHAETALDLEDALRLRSGISATVFHEGMSILERDRAAAYFADEEFGAQVLICSEIGSEGRNFQFAHHLVLFDLPAHPDLLEQRIGRLDRIGQRHTIQLHVPHLENSAQQRLFQWYHQALNAFLNTCPTGNALQHEFGPRLLPLLDGGEDKAWDALLAEGRARREALEAELHSGRDRLLELNSGGAGEGEALVEAIEEQDDDFALPIYMERLFDAYGIHSEDHSENALILKPSEKMLDAGFPLGDDEGVTITYDRAQALAREDMQFLTWEHPMVQGGMDLVLSGSMGNTSVALIKNKALKPGTVLLELLFVSEAVAPRALQLGRWLPPQALRCLLDANGNDLAGRVSLETLNDQLESVPRVSANKFVQAQRDVLAKQFDVAEGKIVPRHEERVARAKQQFAAAMDEELARLTALKAVNPSVRDSELDSLRTQREEGLALLDKASLRLEAIRILVAG.

The Helicase ATP-binding domain maps to 165–333 (EVADRMAPRV…FARLRLLDPN (169 aa)). 178–185 (DEVGLGKT) contacts ATP. Positions 279 to 282 (DEAH) match the DEAH box motif. In terms of domain architecture, Helicase C-terminal spans 475–629 (RVEWLIDTLK…TCPTGNALQH (155 aa)).

The protein belongs to the SNF2/RAD54 helicase family. RapA subfamily. As to quaternary structure, interacts with the RNAP. Has a higher affinity for the core RNAP than for the holoenzyme. Its ATPase activity is stimulated by binding to RNAP.

In terms of biological role, transcription regulator that activates transcription by stimulating RNA polymerase (RNAP) recycling in case of stress conditions such as supercoiled DNA or high salt concentrations. Probably acts by releasing the RNAP, when it is trapped or immobilized on tightly supercoiled DNA. Does not activate transcription on linear DNA. Probably not involved in DNA repair. In Pseudomonas aeruginosa (strain LESB58), this protein is RNA polymerase-associated protein RapA.